The sequence spans 229 residues: uncharacterized protein (229 aa).

This is an uncharacterized protein from Bacillus subtilis (strain 168).